The chain runs to 453 residues: D-aminoacyl-tRNA deacylase (453 aa).

Positions 428-453 (VRADVALHERPRERVRRPSDDEGKGN) are disordered.

Belongs to the DtdA deacylase family. In terms of assembly, monomer. Zn(2+) serves as cofactor.

It carries out the reaction a D-aminoacyl-tRNA + H2O = a tRNA + a D-alpha-amino acid + H(+). The catalysed reaction is glycyl-tRNA(Ala) + H2O = tRNA(Ala) + glycine + H(+). Functionally, D-aminoacyl-tRNA deacylase with broad substrate specificity. By recycling D-aminoacyl-tRNA to D-amino acids and free tRNA molecules, this enzyme counteracts the toxicity associated with the formation of D-aminoacyl-tRNA entities in vivo. The polypeptide is D-aminoacyl-tRNA deacylase (Halobacterium salinarum (strain ATCC 29341 / DSM 671 / R1)).